The sequence spans 141 residues: MTCVLKGCVNEGTVLGHETCSIGHANKLRKQVADMVGVTRRCAENNCGWFVCVIVNDFTFDVYNCCGRSHLEKCRKRIEARNREIWKQIERIRAERSFATVKKSRNSKPSKKKFKERKEFGTPKRFLRDDVPLGIDQLFAF.

Positions 100-119 (TVKKSRNSKPSKKKFKERKE) are disordered. Basic residues predominate over residues 102–115 (KKSRNSKPSKKKFK).

This chain is 16 kDa protein, found in Tobacco rattle virus (strain PLB).